The sequence spans 605 residues: Kelch-like protein 26 (605 aa).

Residues Leu53–Leu120 form the BTB domain. The 102-residue stretch at Cys155–Gln256 folds into the BACK domain. Kelch repeat units follow at residues Ser300–Asn351, Phe352–Gly403, Gln404–Asp450, Leu452–Asn498, Arg499–Lys549, and Ile551–Leu598.

In terms of biological role, may play a role in endo(sarco)plasmic reticulum (ER/SR) mitochondrial signaling. May be part of the ubiquitin-proteasome system (UPS) and affect ubiquitination and degradation of target substrates. The sequence is that of Kelch-like protein 26 (klhl26) from Danio rerio (Zebrafish).